Reading from the N-terminus, the 214-residue chain is Adenylate kinase (214 aa).

10-15 is an ATP binding site; the sequence is GAGKGT. Residues 30–59 form an NMP region; sequence STGDMFRAAVKNETPLGLEAKSYMDKGHLV. AMP is bound by residues T31, R36, 57–59, 85–88, and Q92; these read HLV and GFPR. An LID region spans residues 126-163; the sequence is GRWICPVCGASYHTMFNPPKEAGVCDKDGGKLYQREDD. R127 is an ATP binding site. Positions 130 and 133 each coordinate Zn(2+). Residue 136 to 137 coordinates ATP; the sequence is SY. Residues C150 and D153 each coordinate Zn(2+). 2 residues coordinate AMP: R160 and R171. Q199 contacts ATP.

The protein belongs to the adenylate kinase family. Monomer.

It is found in the cytoplasm. It catalyses the reaction AMP + ATP = 2 ADP. The protein operates within purine metabolism; AMP biosynthesis via salvage pathway; AMP from ADP: step 1/1. Catalyzes the reversible transfer of the terminal phosphate group between ATP and AMP. Plays an important role in cellular energy homeostasis and in adenine nucleotide metabolism. This Brevibacillus brevis (strain 47 / JCM 6285 / NBRC 100599) protein is Adenylate kinase.